A 184-amino-acid polypeptide reads, in one-letter code: Peptide deformylase (184 aa).

Fe cation-binding residues include Cys92 and His134. The active site involves Glu135. His138 contributes to the Fe cation binding site.

It belongs to the polypeptide deformylase family. Fe(2+) serves as cofactor.

It catalyses the reaction N-terminal N-formyl-L-methionyl-[peptide] + H2O = N-terminal L-methionyl-[peptide] + formate. Functionally, removes the formyl group from the N-terminal Met of newly synthesized proteins. Requires at least a dipeptide for an efficient rate of reaction. N-terminal L-methionine is a prerequisite for activity but the enzyme has broad specificity at other positions. This Psychrobacter cryohalolentis (strain ATCC BAA-1226 / DSM 17306 / VKM B-2378 / K5) protein is Peptide deformylase.